The sequence spans 457 residues: Argininosuccinate lyase (457 aa).

The protein belongs to the lyase 1 family. Argininosuccinate lyase subfamily.

It is found in the cytoplasm. It catalyses the reaction 2-(N(omega)-L-arginino)succinate = fumarate + L-arginine. The protein operates within amino-acid biosynthesis; L-arginine biosynthesis; L-arginine from L-ornithine and carbamoyl phosphate: step 3/3. This is Argininosuccinate lyase from Aquifex aeolicus (strain VF5).